Here is a 261-residue protein sequence, read N- to C-terminus: MWDLVLSIALSVGCTGAVPLIQSRIVGGWECEKHSQPWQVAVYSHGWAHCGGVLVHPQWVLTAAHCLKKNSQVWLGRHNLFEPEDTGQRVPVSHSFPHPLYNMSLLKHQSLRPDEDSSHDLMLLRLSEPAKITDVVKVLGLPTQEPALGTTCYASGWGSIEPEEFLRPRSLQCVSLHLLSNDMCARAYSEKVTEFMLCAGLWTGGKDTCGGDSGGPLVCNGVLQGITSWGPEPCALPEKPAVYTKVVHYRKWIKDTIAANP.

A signal peptide spans 1 to 18 (MWDLVLSIALSVGCTGAV). A propeptide spans 19–24 (PLIQSR) (activation peptide). Residues 25-258 (IVGGWECEKH…YRKWIKDTIA (234 aa)) form the Peptidase S1 domain. 5 disulfide bridges follow: C31-C173, C50-C66, C152-C219, C184-C198, and C209-C234. Catalysis depends on H65, which acts as the Charge relay system. N102 is a glycosylation site (N-linked (GlcNAc...) asparagine). Catalysis depends on D120, which acts as the Charge relay system. S213 acts as the Charge relay system in catalysis.

It belongs to the peptidase S1 family. Kallikrein subfamily.

It catalyses the reaction Preferential cleavage of Arg-|-Xaa bonds in small molecule substrates. Highly selective action to release kallidin (lysyl-bradykinin) from kininogen involves hydrolysis of Met-|-Xaa or Leu-|-Xaa.. Its function is as follows. Glandular kallikreins cleave Met-Lys and Arg-Ser bonds in kininogen to release Lys-bradykinin. This chain is Kallikrein-2 (KLK2), found in Homo sapiens (Human).